The primary structure comprises 507 residues: MEFPVLTVNPAKIETACLVVPVFKDGDLLPAADKLDDASERLIGQLLDRGDFEPSLGNVQLIPFAPGLGAERLLLVGLGERAKCGESQLIKALDAAFGAIAKLPLDDVAATFTDVPVGERDTAWKARVTLEAAHRACYRFDEFKSEPAPAPRLSSLTLLVGDEDQAAQAELGARVGAAVGEGVSLTRTLGNLPGNVCTPRYLADQAQRLADGADGALNVEILDEDALEALGANALLAVGQGSAEPSRLIVMEYRGAEDPEEAPHILVGKGITFDSGGISLKPGAGMDEMKFDMCGAASVFGTMKTVLGLKPRINVIGVVASAENMPDGRAIKPGDIVKTLKGLNVEILNTDAEGRMVLCDALSYVERFKPASVVDIATLTGAAIIALGHHASGLLSNDDDLALDLLDAGENAWDRAWHLPLWDEYQSQLDSNFADLAHIGGRPAGTITAACFLSRFADAYPWAHLDIAGTAWASGDKKGASGRPVGLLTQYLLDRETEAAETRPSVE.

Mn(2+)-binding residues include lysine 269 and aspartate 274. Residue lysine 281 is part of the active site. 3 residues coordinate Mn(2+): aspartate 292, aspartate 351, and glutamate 353. Arginine 355 is a catalytic residue.

It belongs to the peptidase M17 family. Mn(2+) serves as cofactor.

It localises to the cytoplasm. It catalyses the reaction Release of an N-terminal amino acid, Xaa-|-Yaa-, in which Xaa is preferably Leu, but may be other amino acids including Pro although not Arg or Lys, and Yaa may be Pro. Amino acid amides and methyl esters are also readily hydrolyzed, but rates on arylamides are exceedingly low.. The enzyme catalyses Release of an N-terminal amino acid, preferentially leucine, but not glutamic or aspartic acids.. Presumably involved in the processing and regular turnover of intracellular proteins. Catalyzes the removal of unsubstituted N-terminal amino acids from various peptides. The chain is Probable cytosol aminopeptidase from Chromohalobacter salexigens (strain ATCC BAA-138 / DSM 3043 / CIP 106854 / NCIMB 13768 / 1H11).